A 76-amino-acid polypeptide reads, in one-letter code: Frizzled-3 (76 aa).

Residues 1-5 (YPERP) are Cytoplasmic-facing. Residues 6 to 26 (IIFYAVCYMMVSLIFFIGFLL) form a helical membrane-spanning segment. Residues 27 to 54 (EDRVACNASSPAQYKASTVTQGSHNKAC) are Extracellular-facing. N33 carries N-linked (GlcNAc...) asparagine glycosylation. A helical transmembrane segment spans residues 55–75 (TMLFMVLYFFTMAGSVWWVIL). Position 76 (R76) is a topological domain, cytoplasmic.

It belongs to the G-protein coupled receptor Fz/Smo family.

The protein localises to the membrane. It localises to the cell membrane. It is found in the cell surface. Its subcellular location is the apical cell membrane. Receptor for Wnt proteins. Most of frizzled receptors are coupled to the beta-catenin canonical signaling pathway, which leads to the activation of disheveled proteins, inhibition of GSK-3 kinase, nuclear accumulation of beta-catenin and activation of Wnt target genes. A second signaling pathway involving PKC and calcium fluxes has been seen for some family members, but it is not yet clear if it represents a distinct pathway or if it can be integrated in the canonical pathway, as PKC seems to be required for Wnt-mediated inactivation of GSK-3 kinase. Both pathways seem to involve interactions with G-proteins. May be involved in transduction and intercellular transmission of polarity information during tissue morphogenesis and/or in differentiated tissues. Plays a role in controlling early axon growth and guidance processes necessary for the formation of a subset of central and peripheral major fiber tracts. Involved in the migration of cranial neural crest cells. May also be implicated in the transmission of sensory information from the trunk and limbs to the brain. Controls commissural sensory axons guidance after midline crossing along the anterior-posterior axis in the developing spinal cord in a Wnt-dependent signaling pathway. Together with FZD6, is involved in the neural tube closure and plays a role in the regulation of the establishment of planar cell polarity (PCP). Promotes neurogenesis by maintaining sympathetic neuroblasts within the cell cycle in a beta-catenin-dependent manner. This chain is Frizzled-3 (FZD3), found in Gallus gallus (Chicken).